The following is a 345-amino-acid chain: Beta-2-glycoprotein 1 (345 aa).

Positions 1 to 19 (MISLGLILFSSVLCHVATA) are cleaved as a signal peptide. Sushi domains lie at 21-81 (RTCP…RCIP), 82-139 (RVCP…VCTR), 140-202 (VTCP…ECRE), and 203-262 (VKCP…SCKA). Disulfide bonds link C23/C66, C51/C79, C84/C124, C110/C137, C142/C188, C174/C200, C205/C248, C234/C260, C264/C315, C300/C325, and C307/C345. Residue T33 is glycosylated (O-linked (GalNAc...) threonine). N-linked (GlcNAc...) asparagine glycans are attached at residues N117, N162, N183, and N193. N-linked (GlcNAc...) asparagine glycosylation occurs at N253. The tract at residues 263–345 (SCKLSVKKAT…KTDASDVKPC (83 aa)) is sushi-like.

As to expression, expressed by the liver and secreted in plasma.

It is found in the secreted. In terms of biological role, binds to various kinds of negatively charged substances such as heparin, phospholipids, and dextran sulfate. May prevent activation of the intrinsic blood coagulation cascade by binding to phospholipids on the surface of damaged cells. The chain is Beta-2-glycoprotein 1 (APOH) from Canis lupus familiaris (Dog).